The chain runs to 96 residues: SAGA complex subunit SUS1 (96 aa).

Lys68 is covalently cross-linked (Glycyl lysine isopeptide (Lys-Gly) (interchain with G-Cter in ubiquitin)).

Belongs to the ENY2 family. In terms of assembly, component of the 1.8 MDa SAGA (Spt-Ada-Gcn5 acetyltransferase) complex, which is composed of 19 subunits TRA1, SPT7, TAF5, NGG1/ADA3, SGF73, SPT20/ADA5, SPT8, TAF12, TAF6, HFI1/ADA1, UBP8, GCN5, ADA2, SPT3, SGF29, TAF10, TAF9, SGF11 and SUS1. The SAGA complex is composed of 4 modules, namely the HAT (histone acetyltransferase) module (GCN5, ADA2, NGG1/ADA3 and SGF29), the DUB (deubiquitinating) module (UBP8, SGF11, SGF73 and SUS1), the core or TAF (TBP-associated factor) module (TAF5, TAF6, TAF9, TAF10 and TAF12), and the Tra1 or SPT (Suppressor of Ty) module (TRA1, HFI1/ADA1, SPT3, SPT7, SPT8 and SPT20/ADA5). The Tra1/SPT module binds activators, the core module recruits TBP (TATA-binding protein), the HAT module contains the histone H3 acetyltransferase GCN5, and the DUB module comprises the histone H2B deubiquitinase UBP8. Also identified in an altered form of SAGA, named SALSA (SAGA altered, Spt8 absent) or SLIK (SAGA-like) complex, which contains a C-terminal truncated form of SPT7 and is missing SPT8. However, it has been shown that the SAGA and SAGA-like SALSA/SLIK transcriptional coactivators are structurally and biochemically equivalent. Component of the nuclear pore complex (NPC)-associated TREX-2 complex (transcription and export complex 2), composed of at least SUS1, SAC3, THP1, SEM1, and CDC31. TREX-2 contains 2 SUS1 chains. The TREX-2 complex interacts with the mRNA export factors MEX67, MTR2 and SUB2, and the nucleoporin NUP1. Interacts directly with THP1, SAC3. Interacts directly with SGF11 and UBP8. Interacts with YRA1, MEX67 and with the RNA polymerase II.

Its subcellular location is the nucleus. It localises to the nucleoplasm. It is found in the cytoplasm. The protein localises to the P-body. Functionally, involved in mRNA export coupled transcription activation by association with both the TREX-2 and the SAGA complexes. SAGA acts as a general cofactor required for essentially all RNA polymerase II transcription. At the promoters, SAGA is required for transcription pre-initiation complex (PIC) recruitment. It influences RNA polymerase II transcriptional activity through different activities such as TBP interaction (via core/TAF module) and promoter selectivity, interaction with transcription activators (via Tra1/SPT module), and chromatin modification through histone acetylation (via HAT module) and deubiquitination (via DUB module). SAGA preferentially acetylates histones H3 (to form H3K9ac, H3K14ac, H3K18ac and H3K23ac) and H2B and deubiquitinates histone H2B. SAGA interacts with DNA via upstream activating sequences (UASs). Also identified in a modified version of SAGA named SALSA or SLIK. The cleavage of SPT7 and the absence of the SPT8 subunit in SLIK neither drive any major conformational differences in its structure compared with SAGA, nor significantly affect HAT, DUB, or DNA-binding activities. Within the SAGA complex, participates in a subcomplex with SGF11, SGF73 and UBP8 required for deubiquitination of H2B and for the maintenance of steady-state H3 methylation levels. The TREX-2 complex functions in docking export-competent ribonucleoprotein particles (mRNPs) to the nuclear entrance of the nuclear pore complex (nuclear basket), by association with components of the nuclear mRNA export machinery (MEX67-MTR2 and SUB2) in the nucleoplasm and the nucleoporin NUP1 at the nuclear basket. TREX-2 participates in mRNA export and accurate chromatin positioning in the nucleus by tethering genes to the nuclear periphery. SUS1 also has a role in mRNP biogenesis and maintenance of genome integrity through preventing RNA-mediated genome instability. Has a role in response to DNA damage induced by methyl methane sulfonate (MMS) and replication arrest induced by hydroxyurea. May also be involved in cytoplasmic mRNA decay by interaction with components of P-bodies. The polypeptide is SAGA complex subunit SUS1 (Saccharomyces cerevisiae (strain ATCC 204508 / S288c) (Baker's yeast)).